Here is an 88-residue protein sequence, read N- to C-terminus: DNA-directed RNA polymerase subunit omega (88 aa).

This sequence belongs to the RNA polymerase subunit omega family. As to quaternary structure, the RNAP catalytic core consists of 2 alpha, 1 beta, 1 beta' and 1 omega subunit. When a sigma factor is associated with the core the holoenzyme is formed, which can initiate transcription.

It carries out the reaction RNA(n) + a ribonucleoside 5'-triphosphate = RNA(n+1) + diphosphate. Its function is as follows. Promotes RNA polymerase assembly. Latches the N- and C-terminal regions of the beta' subunit thereby facilitating its interaction with the beta and alpha subunits. The protein is DNA-directed RNA polymerase subunit omega of Actinobacillus succinogenes (strain ATCC 55618 / DSM 22257 / CCUG 43843 / 130Z).